We begin with the raw amino-acid sequence, 728 residues long: NF-kappa-B inhibitor zeta (728 aa).

Residues Gly-45–Arg-107 are disordered. The segment covering Ser-53–Glu-82 has biased composition (low complexity). The segment covering Ser-83–Val-96 has biased composition (basic and acidic residues). One can recognise an OCA domain in the interval Arg-107–Asn-129. A Nuclear localization signal motif is present at residues Lys-163–Arg-178. Polar residues-rich tracts occupy residues Pro-241–Asp-250 and Gln-268–Ser-288. The interval Pro-241–Leu-334 is disordered. Residues Gln-303–Pro-315 are compositionally biased toward low complexity. A compositionally biased stretch (polar residues) spans Leu-316 to Tyr-330. The tract at residues Lys-329–Ser-403 is required for transcriptional activity. The segment at Met-414 to Tyr-728 is interaction with NFKB1/p50. ANK repeat units lie at residues Asp-453–Met-482, Asn-489–Thr-518, Trp-522–Gln-551, Asp-561–Pro-589, Val-591–Ala-617, Ser-622–Phe-651, and Asn-658–Thr-691.

In terms of assembly, interacts with NFKB1/p50. Interacts with RELA. Interacts with AKIRIN2. Expressed in kidney, liver, lung and heart. Expressed at very low levels in skeletal muscle, spleen and brain.

It is found in the nucleus. Its function is as follows. Involved in regulation of NF-kappa-B transcription factor complexes. Inhibits NF-kappa-B activity without affecting its nuclear translocation upon stimulation. Inhibits DNA-binding of RELA and NFKB1/p50, and of the NF-kappa-B p65-p50 heterodimer and the NF-kappa-B p50-p50 homodimer. Also seems to activate NF-kappa-B-mediated transcription. In vitro, upon association with NFKB1/p50 has transcriptional activation activity and, together with NFKB1/p50 and RELA, is recruited to LCN2 promoters. Promotes transcription of LCN2 and DEFB4. Is recruited to IL-6 promoters and activates IL-6 but decreases TNF-alpha production in response to LPS. Seems to be involved in the induction of inflammatory genes activated through TLR/IL-1 receptor signaling. Involved in the induction of T helper 17 cells (Th17) differentiation upon recognition of antigen by T cell antigen receptor (TCR). This chain is NF-kappa-B inhibitor zeta (Nfkbiz), found in Mus musculus (Mouse).